The sequence spans 444 residues: Ribulose bisphosphate carboxylase (444 aa).

Catalysis depends on K163, which acts as the Proton acceptor. K165 contacts substrate. Mg(2+) contacts are provided by K189, D191, and E192. Residue K189 is modified to N6-carboxylysine. The active-site Proton acceptor is the H281. Substrate-binding positions include R282, H314, 367 to 369, and 389 to 392; these read SGG and QLGG.

It belongs to the RuBisCO large chain family. Type III subfamily. As to quaternary structure, homodimer or homodecamer. In contrast to form I RuBisCO, the form III RuBisCO is composed solely of large subunits. The cofactor is Mg(2+).

It carries out the reaction 2 (2R)-3-phosphoglycerate + 2 H(+) = D-ribulose 1,5-bisphosphate + CO2 + H2O. The catalysed reaction is D-ribulose 1,5-bisphosphate + O2 = 2-phosphoglycolate + (2R)-3-phosphoglycerate + 2 H(+). Catalyzes the addition of molecular CO(2) and H(2)O to ribulose 1,5-bisphosphate (RuBP), generating two molecules of 3-phosphoglycerate (3-PGA). Functions in an archaeal AMP degradation pathway, together with AMP phosphorylase and R15P isomerase. The polypeptide is Ribulose bisphosphate carboxylase (Thermococcus onnurineus (strain NA1)).